The following is an 83-amino-acid chain: Small ribosomal subunit protein eS21 (83 aa).

This sequence belongs to the eukaryotic ribosomal protein eS21 family. Component of the 40S small ribosomal subunit. Interacts with sta.

It localises to the cytoplasm. The protein resides in the cytosol. The protein localises to the rough endoplasmic reticulum. Its function is as follows. May be an associated component of the ribosome rather than a core structural subunit. May act as a translation initiation factor. Has a role in regulation of cell proliferation in the hematopoietic organs and the imaginal disks of larva. The protein is Small ribosomal subunit protein eS21 (RpS21) of Drosophila grimshawi (Hawaiian fruit fly).